The following is a 252-amino-acid chain: MYIIIVSLADPVSRAFLELMGDLPLVETRGDLEIRRLRDTPVVVYRGEPTSFDKEDVLLSVGKHAVFISRHEMANPRPIFTVHTPGSWPDVSVSNPHLASAVLRALCNRLYEPFECAYEATHHTPNTAHISATFVEVGSTDREWGDRKAVGTLLEALEEVLNSPLEEHTPAMVIGDLHYTTVKESALRKEVDIGHVVPKYVEITPAAVETALRKHTVPIKRAILFRKNVKNPARGEILQMLRDRGVEVVLKG.

Belongs to the DtdA deacylase family. In terms of assembly, monomer. It depends on Zn(2+) as a cofactor.

It catalyses the reaction a D-aminoacyl-tRNA + H2O = a tRNA + a D-alpha-amino acid + H(+). It carries out the reaction glycyl-tRNA(Ala) + H2O = tRNA(Ala) + glycine + H(+). Its function is as follows. D-aminoacyl-tRNA deacylase with broad substrate specificity. By recycling D-aminoacyl-tRNA to D-amino acids and free tRNA molecules, this enzyme counteracts the toxicity associated with the formation of D-aminoacyl-tRNA entities in vivo. This Pyrobaculum arsenaticum (strain DSM 13514 / JCM 11321 / PZ6) protein is D-aminoacyl-tRNA deacylase.